Reading from the N-terminus, the 146-residue chain is Hemoglobin subunit beta-1/2 (146 aa).

The residue at position 1 (Val1) is an N-acetylvaline. One can recognise a Globin domain in the interval His2–His146. Ser44 carries the phosphoserine modification. Lys59 is modified (N6-acetyllysine). Residues His63 and His92 each coordinate heme b. Cys93 carries the S-nitrosocysteine modification. At Lys144 the chain carries N6-acetyllysine.

The protein belongs to the globin family. Heterotetramer of two alpha chains and two beta chains. As to expression, red blood cells.

In terms of biological role, involved in oxygen transport from the lung to the various peripheral tissues. The chain is Hemoglobin subunit beta-1/2 (HBB) from Otolemur crassicaudatus (Brown greater galago).